Here is a 137-residue protein sequence, read N- to C-terminus: Small ribosomal subunit protein uS9c (137 aa).

The protein belongs to the universal ribosomal protein uS9 family.

The protein resides in the plastid. It is found in the chloroplast. The polypeptide is Small ribosomal subunit protein uS9c (rps9) (Gracilaria tenuistipitata var. liui (Red alga)).